A 1113-amino-acid chain; its full sequence is Histone deacetylase 5 (1113 aa).

The disordered stretch occupies residues 1 to 22 (MNSPNESDGMSGREPSLGILPR). K35 is covalently cross-linked (Glycyl lysine isopeptide (Lys-Gly) (interchain with G-Cter in SUMO2)). 2 disordered regions span residues 39-63 (PGAMPSSMGGGGGGSPSPVELRGAL) and 187-272 (KEPT…SSPL). Over residues 238–249 (DSRDDFPLRKTA) the composition is skewed to basic and acidic residues. S250 carries the post-translational modification Phosphoserine; by AMPK, CaMK1, SIK1 and PKD/PRKD1. Basic and acidic residues predominate over residues 263–272 (KVAERRSSPL). T283 bears the Phosphothreonine; by PKC mark. Residues 472-494 (RTVGKLPRHRPLSRTQSSPLPQS) are disordered. Residues 484–494 (SRTQSSPLPQS) show a composition bias toward low complexity. S488 is modified (phosphoserine; by AMPK, CaMK1, SIK1 and PKD/PRKD1). N6-acetyllysine is present on K523. The disordered stretch occupies residues 526-611 (TKTGELSRQP…PDEGPDLEES (86 aa)). Residues 571–610 (STQEDLEEEEEEEEEEEEDCIQVKDEDGESGPDEGPDLEE) are compositionally biased toward acidic residues. Phosphoserine is present on residues S600 and S650. The tract at residues 675-1019 (GVVYDTFMLK…VSALLSVELQ (345 aa)) is histone deacetylase. Residues C687, C689, H695, and C772 each coordinate Zn(2+). Residue H824 is part of the active site. Residues 1072 to 1113 (EEAETVSAMALLSVGAEQAQAVATQEHSPRPAEEPMEQEPAL) carry the Nuclear export signal motif. The segment at 1088–1113 (EQAQAVATQEHSPRPAEEPMEQEPAL) is disordered. S1099 is subject to Phosphoserine.

This sequence belongs to the histone deacetylase family. HD type 2 subfamily. In terms of assembly, interacts with AHRR, BAHD1, BCOR, HDAC7, HDAC9, CTBP1, MEF2C, NCOR2, NRIP1, PHB2 and a 14-3-3 chaperone protein. Interacts with BCL6, DDIT3/CHOP, GRK5, KDM5B and MYOCD. Interacts with EP300 in the presence of TFAP2C. Interacts with ANKRA2. Interacts with CUL7 (as part of the 3M complex); negatively regulated by ANKRA2. Interacts with ZBTB7B; the interaction allows the recruitment of HDAC4 on CD8 loci for deacetylation and possible inhibition of CD8 genes expression. Interacts with RARA. Phosphorylated by AMPK, CaMK1, SIK1 and PRKD1 at Ser-250 and Ser-488. The phosphorylation is required for the export to the cytoplasm and inhibition. Phosphorylated by the PKC kinases PKN1 and PKN2, impairing nuclear import. Phosphorylated by GRK5, leading to nuclear export of HDAC5 and allowing MEF2-mediated transcription. In terms of processing, ubiquitinated. Polyubiquitination however does not lead to its degradation.

The protein resides in the nucleus. It localises to the cytoplasm. The catalysed reaction is N(6)-acetyl-L-lysyl-[histone] + H2O = L-lysyl-[histone] + acetate. Its function is as follows. Responsible for the deacetylation of lysine residues on the N-terminal part of the core histones (H2A, H2B, H3 and H4). Histone deacetylation gives a tag for epigenetic repression and plays an important role in transcriptional regulation, cell cycle progression and developmental events. Histone deacetylases act via the formation of large multiprotein complexes. Involved in muscle maturation by repressing transcription of myocyte enhancer MEF2C. During muscle differentiation, it shuttles into the cytoplasm, allowing the expression of myocyte enhancer factors. Serves as a corepressor of RARA and causes its deacetylation. In association with RARA, plays a role in the repression of microRNA-10a and thereby in the inflammatory response. This is Histone deacetylase 5 (Hdac5) from Mus musculus (Mouse).